Here is a 390-residue protein sequence, read N- to C-terminus: S-adenosylmethionine synthase 3 (390 aa).

Residue E9 coordinates Mg(2+). An ATP-binding site is contributed by H15. Position 43 (E43) interacts with K(+). E56 and Q99 together coordinate L-methionine. ATP is bound by residues 167–169 (DGK), 235–238 (SGRF), D246, 252–253 (RK), A269, K273, and K277. An L-methionine-binding site is contributed by D246. K277 serves as a coordination point for L-methionine.

This sequence belongs to the AdoMet synthase family. Homotetramer. Interacts with GRF3. Mn(2+) serves as cofactor. Requires Mg(2+) as cofactor. Co(2+) is required as a cofactor. The cofactor is K(+).

Its subcellular location is the cytoplasm. The catalysed reaction is L-methionine + ATP + H2O = S-adenosyl-L-methionine + phosphate + diphosphate. The protein operates within amino-acid biosynthesis; S-adenosyl-L-methionine biosynthesis; S-adenosyl-L-methionine from L-methionine: step 1/1. With respect to regulation, inhibited by 5,5'-dithiobis-2-nitrobenzoic acid (DTNB) and N-ethylmaleimide (NEM) (in vitro). Functionally, catalyzes the formation of S-adenosylmethionine from methionine and ATP. The reaction comprises two steps that are both catalyzed by the same enzyme: formation of S-adenosylmethionine (AdoMet) and triphosphate, and subsequent hydrolysis of the triphosphate. Involved in the biosynthesis of lignin. This is S-adenosylmethionine synthase 3 (METK3) from Arabidopsis thaliana (Mouse-ear cress).